Here is a 388-residue protein sequence, read N- to C-terminus: Dual-specificity RNA methyltransferase RlmN (388 aa).

The active-site Proton acceptor is the glutamate 109. The 240-residue stretch at glutamate 115 to aspartate 354 folds into the Radical SAM core domain. A disulfide bridge links cysteine 122 with cysteine 359. [4Fe-4S] cluster contacts are provided by cysteine 129, cysteine 133, and cysteine 136. Residues glycine 183 to glutamate 184, serine 215, serine 237 to histidine 239, and asparagine 316 each bind S-adenosyl-L-methionine. Cysteine 359 serves as the catalytic S-methylcysteine intermediate.

The protein belongs to the radical SAM superfamily. RlmN family. [4Fe-4S] cluster is required as a cofactor.

Its subcellular location is the cytoplasm. It catalyses the reaction adenosine(2503) in 23S rRNA + 2 reduced [2Fe-2S]-[ferredoxin] + 2 S-adenosyl-L-methionine = 2-methyladenosine(2503) in 23S rRNA + 5'-deoxyadenosine + L-methionine + 2 oxidized [2Fe-2S]-[ferredoxin] + S-adenosyl-L-homocysteine. The enzyme catalyses adenosine(37) in tRNA + 2 reduced [2Fe-2S]-[ferredoxin] + 2 S-adenosyl-L-methionine = 2-methyladenosine(37) in tRNA + 5'-deoxyadenosine + L-methionine + 2 oxidized [2Fe-2S]-[ferredoxin] + S-adenosyl-L-homocysteine. Specifically methylates position 2 of adenine 2503 in 23S rRNA and position 2 of adenine 37 in tRNAs. m2A2503 modification seems to play a crucial role in the proofreading step occurring at the peptidyl transferase center and thus would serve to optimize ribosomal fidelity. In Cronobacter sakazakii (strain ATCC BAA-894) (Enterobacter sakazakii), this protein is Dual-specificity RNA methyltransferase RlmN.